The sequence spans 416 residues: Gamma-glutamyl phosphate reductase (416 aa).

Belongs to the gamma-glutamyl phosphate reductase family.

The protein localises to the cytoplasm. It carries out the reaction L-glutamate 5-semialdehyde + phosphate + NADP(+) = L-glutamyl 5-phosphate + NADPH + H(+). The protein operates within amino-acid biosynthesis; L-proline biosynthesis; L-glutamate 5-semialdehyde from L-glutamate: step 2/2. Its function is as follows. Catalyzes the NADPH-dependent reduction of L-glutamate 5-phosphate into L-glutamate 5-semialdehyde and phosphate. The product spontaneously undergoes cyclization to form 1-pyrroline-5-carboxylate. This chain is Gamma-glutamyl phosphate reductase, found in Streptococcus thermophilus (strain CNRZ 1066).